We begin with the raw amino-acid sequence, 320 residues long: MSVGFIGAGQLACALARGFTAAGILSAHKIIASSPEMDLPTVSALRKMGVNLTRSNKETVRHSDVLFLAVKPHIIPFILDEIGADVQARHIVVSCAAGVTISSVEKKLMAFQPAPKVIRCMTNTPVLVREGATVYATGTHALVEDGQLLEQLMSSVGFCTEVEEDLIDAVTGLSGSGPAYAFMALDALADGGVKMGLPRRLAVRLGAQALLGAAKMLLDSEQHPGQLKDNVCSPGGATIHALHFLESGGFRSLLINAVEASCIRTRELQSMADQEKISPAALKKTLLDRVKLESPTVTTLTPTSSGKLLTRSPVPGGKKD.

Ser-2 bears the N-acetylserine mark. NADP(+) contacts are provided by residues 6–11 (IGAGQL) and Ser-34. Positions 8, 10, 11, 34, 36, 56, 70, 71, and 97 each coordinate NADPH. Residues Asn-56, 69 to 72 (AVKP), and 95 to 97 (CAA) contribute to the NADP(+) site. Glu-164 is an L-proline binding site. NADPH is bound at residue Asn-230. 2 residues coordinate L-proline: Ala-237 and Thr-238. Residues 298–320 (TTLTPTSSGKLLTRSPVPGGKKD) form a disordered region. Ser-304 is modified (phosphoserine).

This sequence belongs to the pyrroline-5-carboxylate reductase family. As to quaternary structure, homodecamer; composed of 5 homodimers. Interacts with LTO1.

The protein resides in the cytoplasm. Its subcellular location is the mitochondrion. The catalysed reaction is L-proline + NADP(+) = (S)-1-pyrroline-5-carboxylate + NADPH + 2 H(+). The enzyme catalyses L-proline + NAD(+) = (S)-1-pyrroline-5-carboxylate + NADH + 2 H(+). Its pathway is amino-acid biosynthesis; L-proline biosynthesis; L-proline from L-glutamate 5-semialdehyde: step 1/1. Oxidoreductase that catalyzes the last step in proline biosynthesis, which corresponds to the reduction of pyrroline-5-carboxylate to L-proline using NAD(P)H. At physiologic concentrations, has higher specific activity in the presence of NADH. Involved in cellular response to oxidative stress. In some cell types, such as erythrocytes, its primary function may be the generation of NADP(+). In Bos taurus (Bovine), this protein is Pyrroline-5-carboxylate reductase 2 (PYCR2).